Reading from the N-terminus, the 420-residue chain is E3 ubiquitin-protein ligase pellino homolog 2 (420 aa).

The 188-residue stretch at 15-202 folds into the FHA; atypical domain; sequence EPVKYGELVV…MHPRGGFTEE (188 aa).

This sequence belongs to the pellino family. Interacts with TRAF6, IRAK1, IRAK4 and MAP3K7. Interacts with BCL10; this interaction is impaired by SOCS3. In terms of processing, phosphorylated by IRAK1 and IRAK4 enhancing its E3 ligase activity.

The enzyme catalyses S-ubiquitinyl-[E2 ubiquitin-conjugating enzyme]-L-cysteine + [acceptor protein]-L-lysine = [E2 ubiquitin-conjugating enzyme]-L-cysteine + N(6)-ubiquitinyl-[acceptor protein]-L-lysine.. It participates in protein modification; protein ubiquitination. E3 ubiquitin ligase catalyzing the covalent attachment of ubiquitin moieties onto substrate proteins. Involved in the TLR and IL-1 signaling pathways via interaction with the complex containing IRAK kinases and TRAF6. Mediates IL1B-induced IRAK1 'Lys-63'-linked polyubiquitination and possibly 'Lys-48'-linked ubiquitination. May be important for LPS- and IL1B-induced MAP3K7-dependent, but not MAP3K3-dependent, NF-kappa-B activation. Can activate the MAP (mitogen activated protein) kinase pathway leading to activation of ELK1. This Homo sapiens (Human) protein is E3 ubiquitin-protein ligase pellino homolog 2 (PELI2).